Reading from the N-terminus, the 336-residue chain is Cell division protein ZipA (336 aa).

Topologically, residues 1–2 (ME) are periplasmic. The helical transmembrane segment at 3-23 (LHILFFILAGLLIAVLIGFSL) threads the bilayer. Over 24 to 336 (WSARREKSRI…SRQAYLARVS (313 aa)) the chain is Cytoplasmic.

The protein belongs to the ZipA family. In terms of assembly, interacts with FtsZ via their C-terminal domains.

It localises to the cell inner membrane. Its function is as follows. Essential cell division protein that stabilizes the FtsZ protofilaments by cross-linking them and that serves as a cytoplasmic membrane anchor for the Z ring. Also required for the recruitment to the septal ring of downstream cell division proteins. The polypeptide is Cell division protein ZipA (Actinobacillus pleuropneumoniae serotype 5b (strain L20)).